The chain runs to 227 residues: Enolase-phosphatase E1 (227 aa).

Mg(2+)-binding residues include Asp-11 and Glu-13. Substrate contacts are provided by residues 118 to 119 (SS) and Lys-161. Asp-186 is a Mg(2+) binding site.

It belongs to the HAD-like hydrolase superfamily. MasA/MtnC family. Monomer. Mg(2+) serves as cofactor.

The protein localises to the cytoplasm. It localises to the nucleus. The catalysed reaction is 5-methylsulfanyl-2,3-dioxopentyl phosphate + H2O = 1,2-dihydroxy-5-(methylsulfanyl)pent-1-en-3-one + phosphate. It participates in amino-acid biosynthesis; L-methionine biosynthesis via salvage pathway; L-methionine from S-methyl-5-thio-alpha-D-ribose 1-phosphate: step 3/6. The protein operates within amino-acid biosynthesis; L-methionine biosynthesis via salvage pathway; L-methionine from S-methyl-5-thio-alpha-D-ribose 1-phosphate: step 4/6. Functionally, bifunctional enzyme that catalyzes the enolization of 2,3-diketo-5-methylthiopentyl-1-phosphate (DK-MTP-1-P) into the intermediate 2-hydroxy-3-keto-5-methylthiopentenyl-1-phosphate (HK-MTPenyl-1-P), which is then dephosphorylated to form the acireductone 1,2-dihydroxy-3-keto-5-methylthiopentene (DHK-MTPene). This chain is Enolase-phosphatase E1, found in Saccharomyces cerevisiae (strain JAY291) (Baker's yeast).